Here is a 250-residue protein sequence, read N- to C-terminus: Coproheme decarboxylase (250 aa).

Fe-coproporphyrin III is bound by residues R131, 145-149 (YPMNK), H172, and Q185. Y145 is a catalytic residue.

The protein belongs to the ChdC family. Type 1 subfamily. Fe-coproporphyrin III is required as a cofactor.

The catalysed reaction is Fe-coproporphyrin III + 2 H2O2 + 2 H(+) = heme b + 2 CO2 + 4 H2O. It carries out the reaction Fe-coproporphyrin III + H2O2 + H(+) = harderoheme III + CO2 + 2 H2O. It catalyses the reaction harderoheme III + H2O2 + H(+) = heme b + CO2 + 2 H2O. Its pathway is porphyrin-containing compound metabolism; protoheme biosynthesis. Involved in coproporphyrin-dependent heme b biosynthesis. Catalyzes the decarboxylation of Fe-coproporphyrin III (coproheme) to heme b (protoheme IX), the last step of the pathway. The reaction occurs in a stepwise manner with a three-propionate intermediate. The sequence is that of Coproheme decarboxylase from Staphylococcus aureus (strain Mu50 / ATCC 700699).